The following is a 351-amino-acid chain: Heat-inducible transcription repressor HrcA (351 aa).

It belongs to the HrcA family.

Negative regulator of class I heat shock genes (grpE-dnaK-dnaJ and groELS operons). Prevents heat-shock induction of these operons. The chain is Heat-inducible transcription repressor HrcA from Clostridium tetani (strain Massachusetts / E88).